We begin with the raw amino-acid sequence, 198 residues long: Recombination protein RecR (198 aa).

The segment at cysteine 57–cysteine 72 adopts a C4-type zinc-finger fold. One can recognise a Toprim domain in the interval serine 80 to alanine 175.

It belongs to the RecR family.

May play a role in DNA repair. It seems to be involved in an RecBC-independent recombinational process of DNA repair. It may act with RecF and RecO. This is Recombination protein RecR from Streptococcus agalactiae serotype Ia (strain ATCC 27591 / A909 / CDC SS700).